The chain runs to 908 residues: SKI/DACH domain-containing protein 1 (908 aa).

A compositionally biased stretch (basic residues) spans 337-353 (HHHHHHHHHHHHHHHRA). The interval 337 to 461 (HHHHHHHHHH…SSSGSSQVSV (125 aa)) is disordered. 2 stretches are compositionally biased toward low complexity: residues 370–389 (PHLG…SSYS) and 396–410 (SDFG…NSVS). A compositionally biased stretch (acidic residues) spans 411-429 (SEEEEEEGEEEEEEEEEEG). Residues 449-461 (ESDSSSGSSQVSV) are compositionally biased toward low complexity. Residue Lys-688 forms a Glycyl lysine isopeptide (Lys-Gly) (interchain with G-Cter in SUMO2) linkage. 2 disordered regions span residues 744–763 (ETPS…TLGS) and 792–818 (LQTP…TNEG). Over residues 746-761 (PSLNPLAQSQGLSCTL) the composition is skewed to polar residues.

Belongs to the DACH/dachshund family.

This Homo sapiens (Human) protein is SKI/DACH domain-containing protein 1 (SKIDA1).